The chain runs to 447 residues: Argininosuccinate synthase (447 aa).

ATP-binding positions include 17 to 25 (AFSGGLDTS) and alanine 43. Residue tyrosine 99 coordinates L-citrulline. The ATP site is built by glycine 129 and threonine 131. 3 residues coordinate L-aspartate: threonine 131, asparagine 135, and aspartate 136. Position 135 (asparagine 135) interacts with L-citrulline. Aspartate 136 serves as a coordination point for ATP. Positions 139 and 192 each coordinate L-citrulline. Residue aspartate 194 coordinates ATP. Residues threonine 201, glutamate 203, and glutamate 280 each contribute to the L-citrulline site.

Belongs to the argininosuccinate synthase family. Type 2 subfamily. In terms of assembly, homotetramer.

Its subcellular location is the cytoplasm. The catalysed reaction is L-citrulline + L-aspartate + ATP = 2-(N(omega)-L-arginino)succinate + AMP + diphosphate + H(+). The protein operates within amino-acid biosynthesis; L-arginine biosynthesis; L-arginine from L-ornithine and carbamoyl phosphate: step 2/3. The chain is Argininosuccinate synthase from Escherichia coli (strain K12 / MC4100 / BW2952).